A 264-amino-acid polypeptide reads, in one-letter code: MDQNKSTQATGNGKKTEEINELLESFIKEGPKLLWGSTNLKYEDQISRSSEHELQQYRELFTRLKFSYIEQGTKERYLRAILDDPPMLVEAEDNEKLETTNSSLKGRLKSEKREVDLLTEELKTTSRELSSNYESVMEECKNTKSTLSKLESLESELLKLQQDSSTKTPILPEVEAAIHDLESELNITNESIETIDGKIDNDEKYFIQLTKNLSLLEKEYKIASERSNQIKAAIHTRTPDADAKKQVQNWYTSMLEIYDQLLQK.

Residues 90–236 (EAEDNEKLET…SNQIKAAIHT (147 aa)) adopt a coiled-coil conformation.

Belongs to the KRE28 family. As to quaternary structure, component of the KNL1/SPC105 complex composed of at least spc7 and sos7. Part of the outer kinetochore KMN network that includes the KNL1, MIS12 and NDC80 complexes. Interacts (via C-terminus) with spc7 (via C-terminus); the interaction is direct.

The protein resides in the nucleus. The protein localises to the chromosome. Its subcellular location is the centromere. It localises to the kinetochore. Functionally, acts as a component of the outer kinetochore KNL1 complex that facilitates microtubule-kinetochore interactions and the spindle assembly checkpoint. Kinetochores, consisting of a centromere-associated inner segment and a microtubule-contacting outer segment, play a crucial role in chromosome segregation by mediating the physical connection between centromeric DNA and spindle microtubules. The outer kinetochore is made up of the ten-subunit KMN network, comprising the MIS12, NDC80 and KNL1 complexes, and auxiliary microtubule-associated components; together they connect the outer kinetochore with the inner kinetochore, bind microtubules, and mediate interactions with mitotic checkpoint proteins that delay anaphase until chromosomes are bioriented on the spindle. The polypeptide is Outer kinetochore KNL1 complex subunit sos7 (sos7) (Schizosaccharomyces pombe (strain 972 / ATCC 24843) (Fission yeast)).